Consider the following 765-residue polypeptide: Zinc transporter ZIP6 (765 aa).

The signal sequence occupies residues 1-20 (MATDLSVIMILTFALWVTSP). The Extracellular segment spans residues 21–335 (LHELQSTAAF…PKTYSLQIAW (315 aa)). Residue Asn68 is glycosylated (N-linked (GlcNAc...) asparagine). 2 stretches are compositionally biased toward basic and acidic residues: residues 96–135 (DHEHHADHEHHSDHEHHSDHEHHSDHEHHSDHEHHSDHEH) and 174–186 (RPAEHMNGRRNIK). 2 disordered regions span residues 96-196 (DHEH…EVTS) and 209-257 (VETI…SEPR). A compositionally biased stretch (low complexity) spans 187 to 196 (ESASSSEVTS). A compositionally biased stretch (polar residues) spans 224 to 233 (VNPSTPPSIT). A compositionally biased stretch (basic residues) spans 238–247 (VGRLSRLARK). A compositionally biased stretch (basic and acidic residues) spans 248–257 (KSNESVSEPR). Asn250, Asn275, and Asn292 each carry an N-linked (GlcNAc...) asparagine glycan. Residues 336–356 (LGGFIAISIISFLSLLGVILV) form a helical membrane-spanning segment. Residues 357–365 (PLMNRVFFK) lie on the Cytoplasmic side of the membrane. A helical transmembrane segment spans residues 366 to 386 (FLLSFLVALAVGTLSGDALLH). Residues 387–433 (LLPHSHASHQHSHSHEEPAMEMKRGPLFSHLSAQNIEESSYFDSTWK) are Extracellular-facing. Residues 434 to 454 (GLTALGGLYFMFLVEHVLTLI) form a helical membrane-spanning segment. Over 455-667 (KQFKDKKKKN…LKAGMTVKQA (213 aa)) the chain is Cytoplasmic. Residues 458–519 (KDKKKKNQKK…EPSPFDSQQP (62 aa)) form a disordered region. A coiled-coil region spans residues 475–495 (ESKKQLSKYDSQLSSNEEKVD). Residues Ser481 and Ser488 each carry the phosphoserine modification. Over residues 490–508 (NEEKVDPGERPESYLRADS) the composition is skewed to basic and acidic residues. The span at 509-519 (QEPSPFDSQQP) shows a compositional bias: polar residues. A helical transmembrane segment spans residues 668–688 (VLYNALSAMLAYLGMATGIFI). The Extracellular portion of the chain corresponds to 689–696 (GHYAENVS). An N-linked (GlcNAc...) asparagine glycan is attached at Asn694. A helical membrane pass occupies residues 697 to 717 (MWIFALTAGLFMYVALVDMVP). At 718–734 (EMLHNDASDHGCSRWGY) the chain is on the cytoplasmic side. Residues 735 to 755 (FFLQNAGILLGFGIMLLISIF) form a helical membrane-spanning segment. Over 756–765 (EHKIVFRINF) the chain is Extracellular.

This sequence belongs to the ZIP transporter (TC 2.A.5) family. In terms of assembly, interacts with SLC39A10; which triggers cells to undergo EMT and mitosis. Found in a complex with SLC39A6, SLC39A10 and with the 'Ser-727' phosphorylated form of STAT3 throughout mitosis. Found in a complex with SLC39A6, SLC39A10 and with NCAM1; this complex controls NCAM1 phosphorylation and integration into focal adhesion complexes during epithelial-to-mesenchymal transition (EMT). Found in a complex with SLC39A6, SLC39A10 and with GSK3B that controls NCAM1 phosphorylation. Post-translationally, cleaved on the N-terminus before locating to the plasma membrane. In terms of processing, N-glycosylated. Phosphorylated by ZAP70 in response to TCR stimulation leading to its activation. As to expression, highly expressed in the brain and testis. In the brain strongly expressed in the CA1 and CA3 regions, Purkinje cells in cerebellum and dentate gyrus in hippocampus. In testis found in spermatids or mature sperms in the central areas of seminiferous tubules.

The protein resides in the cell membrane. The protein localises to the cell projection. Its subcellular location is the lamellipodium membrane. It localises to the membrane raft. It is found in the apical cell membrane. The catalysed reaction is Zn(2+)(in) = Zn(2+)(out). Functionally, zinc-influx transporter which plays a role in zinc homeostasis and in the induction of epithelial-to-mesenchymal transition (EMT). When associated with SLC39A10, the heterodimer formed by SLC39A10 and SLC39A6 mediates cellular zinc uptake to trigger cells to undergo epithelial- to-mesenchymal transition (EMT). The SLC39A10-SLC39A6 heterodimer also controls NCAM1 phosphorylation and its integration into focal adhesion complexes during EMT. Zinc influx inactivates GSK3B, enabling unphosphorylated SNAI1 in the nucleus to down-regulate adherence genes such as E-cadherin, causing loss of cell adherence. In addition, the SLC39A10-SLC39A6 heterodimer plays an essentiel role in initiating mitosis by importing zinc into cells to initiate a pathway resulting in the onset of mitosis. Participates in the T-cell receptor signaling regulation by mediating cellular zinc uptake into activated lymphocytes. Regulates the zinc influx necessary for proper meiotic progression to metaphase II (MII) that allows the oocyte-to-egg transition. This is Zinc transporter ZIP6 from Mus musculus (Mouse).